A 374-amino-acid polypeptide reads, in one-letter code: Probable dual-specificity RNA methyltransferase RlmN 3 (374 aa).

Glu96 serves as the catalytic Proton acceptor. The region spanning 110–350 (DHSRKTICIS…VTLRREKGHD (241 aa)) is the Radical SAM core domain. A disulfide bridge links Cys117 with Cys355. Residues Cys124, Cys128, and Cys131 each contribute to the [4Fe-4S] cluster site. Residues 181 to 182 (GE), Ser213, 236 to 238 (SLH), and Asn312 contribute to the S-adenosyl-L-methionine site. Cys355 functions as the S-methylcysteine intermediate in the catalytic mechanism.

It belongs to the radical SAM superfamily. RlmN family. [4Fe-4S] cluster serves as cofactor.

Its subcellular location is the cytoplasm. It carries out the reaction adenosine(2503) in 23S rRNA + 2 reduced [2Fe-2S]-[ferredoxin] + 2 S-adenosyl-L-methionine = 2-methyladenosine(2503) in 23S rRNA + 5'-deoxyadenosine + L-methionine + 2 oxidized [2Fe-2S]-[ferredoxin] + S-adenosyl-L-homocysteine. It catalyses the reaction adenosine(37) in tRNA + 2 reduced [2Fe-2S]-[ferredoxin] + 2 S-adenosyl-L-methionine = 2-methyladenosine(37) in tRNA + 5'-deoxyadenosine + L-methionine + 2 oxidized [2Fe-2S]-[ferredoxin] + S-adenosyl-L-homocysteine. Specifically methylates position 2 of adenine 2503 in 23S rRNA and position 2 of adenine 37 in tRNAs. This is Probable dual-specificity RNA methyltransferase RlmN 3 from Opitutus terrae (strain DSM 11246 / JCM 15787 / PB90-1).